The primary structure comprises 493 residues: Glutamyl-tRNA(Gln) amidotransferase subunit A (493 aa).

Catalysis depends on charge relay system residues K81 and S156. S180 serves as the catalytic Acyl-ester intermediate.

Belongs to the amidase family. GatA subfamily. Heterotrimer of A, B and C subunits.

It catalyses the reaction L-glutamyl-tRNA(Gln) + L-glutamine + ATP + H2O = L-glutaminyl-tRNA(Gln) + L-glutamate + ADP + phosphate + H(+). In terms of biological role, allows the formation of correctly charged Gln-tRNA(Gln) through the transamidation of misacylated Glu-tRNA(Gln) in organisms which lack glutaminyl-tRNA synthetase. The reaction takes place in the presence of glutamine and ATP through an activated gamma-phospho-Glu-tRNA(Gln). The sequence is that of Glutamyl-tRNA(Gln) amidotransferase subunit A from Mycobacterium ulcerans (strain Agy99).